A 403-amino-acid polypeptide reads, in one-letter code: Phosphoglycerate kinase (403 aa).

Residues 21 to 23, Arg36, 59 to 62, Arg119, and Arg154 each bind substrate; these read DFN and HVGR. ATP-binding positions include Lys207, Gly299, Glu330, and 357–360; that span reads GGDA.

This sequence belongs to the phosphoglycerate kinase family. As to quaternary structure, monomer.

The protein localises to the cytoplasm. It catalyses the reaction (2R)-3-phosphoglycerate + ATP = (2R)-3-phospho-glyceroyl phosphate + ADP. The protein operates within carbohydrate degradation; glycolysis; pyruvate from D-glyceraldehyde 3-phosphate: step 2/5. In Chlamydia trachomatis serovar D (strain ATCC VR-885 / DSM 19411 / UW-3/Cx), this protein is Phosphoglycerate kinase (pgk).